Reading from the N-terminus, the 360-residue chain is 3-dehydroquinate synthase (360 aa).

NAD(+)-binding positions include Gly106 to Asp110, Thr130 to Ser131, Lys143, and Lys152. Residues Glu185, His246, and His262 each coordinate Zn(2+).

This sequence belongs to the sugar phosphate cyclases superfamily. Dehydroquinate synthase family. The cofactor is Co(2+). Zn(2+) serves as cofactor. NAD(+) is required as a cofactor.

It localises to the cytoplasm. The enzyme catalyses 7-phospho-2-dehydro-3-deoxy-D-arabino-heptonate = 3-dehydroquinate + phosphate. Its pathway is metabolic intermediate biosynthesis; chorismate biosynthesis; chorismate from D-erythrose 4-phosphate and phosphoenolpyruvate: step 2/7. Catalyzes the conversion of 3-deoxy-D-arabino-heptulosonate 7-phosphate (DAHP) to dehydroquinate (DHQ). This chain is 3-dehydroquinate synthase, found in Leuconostoc citreum (strain KM20).